The chain runs to 329 residues: GTP 3',8-cyclase (329 aa).

Positions 8-234 (AFARKFYYLR…QLRQRSDGPA (227 aa)) constitute a Radical SAM core domain. Residue Arg17 participates in GTP binding. Residues Cys24 and Cys28 each contribute to the [4Fe-4S] cluster site. Position 30 (Tyr30) interacts with S-adenosyl-L-methionine. Cys31 contacts [4Fe-4S] cluster. Arg68 lines the GTP pocket. Gly72 provides a ligand contact to S-adenosyl-L-methionine. Thr99 provides a ligand contact to GTP. Ser123 contacts S-adenosyl-L-methionine. Lys160 contributes to the GTP binding site. Met194 is a binding site for S-adenosyl-L-methionine. Positions 257 and 260 each coordinate [4Fe-4S] cluster. GTP is bound at residue 262–264 (RLR). Position 274 (Cys274) interacts with [4Fe-4S] cluster.

The protein belongs to the radical SAM superfamily. MoaA family. Monomer and homodimer. [4Fe-4S] cluster serves as cofactor.

The catalysed reaction is GTP + AH2 + S-adenosyl-L-methionine = (8S)-3',8-cyclo-7,8-dihydroguanosine 5'-triphosphate + 5'-deoxyadenosine + L-methionine + A + H(+). Its pathway is cofactor biosynthesis; molybdopterin biosynthesis. In terms of biological role, catalyzes the cyclization of GTP to (8S)-3',8-cyclo-7,8-dihydroguanosine 5'-triphosphate. The sequence is that of GTP 3',8-cyclase from Salmonella paratyphi B (strain ATCC BAA-1250 / SPB7).